We begin with the raw amino-acid sequence, 240 residues long: MRIDVLTLFPEMFSIFNHSIIGRAIGKEILKINTVNIRDYTIDKHKKVDDYPYGGGAGMVMAAQPIVDSIKTVKKENKGKVIFLGPKGKTFNQNLAKELAKEEELIFLCGHYEGIDERAYEYIDMEISLGDFVLTGGEMACIPIVDSICRLVDGVLKSSESYEDESFYNGLLEYPQYTRPPIYEGKAVPDVLLSGHHENIKKWRKAKSLMITKKVRPDLLKKYRLTEEDKKILKDFNKKL.

S-adenosyl-L-methionine is bound by residues G110 and 129-134 (LGDFVL).

It belongs to the RNA methyltransferase TrmD family. In terms of assembly, homodimer.

The protein localises to the cytoplasm. The enzyme catalyses guanosine(37) in tRNA + S-adenosyl-L-methionine = N(1)-methylguanosine(37) in tRNA + S-adenosyl-L-homocysteine + H(+). Its function is as follows. Specifically methylates guanosine-37 in various tRNAs. In Clostridium botulinum (strain 657 / Type Ba4), this protein is tRNA (guanine-N(1)-)-methyltransferase.